The sequence spans 339 residues: NADH-quinone oxidoreductase subunit H (339 aa).

9 helical membrane passes run 10–30, 50–70, 82–102, 115–135, 155–175, 187–207, 235–255, 275–295, and 311–331; these read FPLT…ILCV, PNVV…KLLF, ILFI…WAVI, VGVL…IIAG, ISYE…TGTL, LPWW…ISVL, MGFA…SAMT, IPGF…FLWI, and GWKV…SVLF.

The protein belongs to the complex I subunit 1 family. In terms of assembly, NDH-1 is composed of 14 different subunits. Subunits NuoA, H, J, K, L, M, N constitute the membrane sector of the complex.

The protein localises to the cell inner membrane. The catalysed reaction is a quinone + NADH + 5 H(+)(in) = a quinol + NAD(+) + 4 H(+)(out). Functionally, NDH-1 shuttles electrons from NADH, via FMN and iron-sulfur (Fe-S) centers, to quinones in the respiratory chain. The immediate electron acceptor for the enzyme in this species is believed to be ubiquinone. Couples the redox reaction to proton translocation (for every two electrons transferred, four hydrogen ions are translocated across the cytoplasmic membrane), and thus conserves the redox energy in a proton gradient. This subunit may bind ubiquinone. In Rickettsia typhi (strain ATCC VR-144 / Wilmington), this protein is NADH-quinone oxidoreductase subunit H.